Consider the following 238-residue polypeptide: Small ribosomal subunit protein uS2 (238 aa).

Belongs to the universal ribosomal protein uS2 family.

This is Small ribosomal subunit protein uS2 from Haemophilus ducreyi (strain 35000HP / ATCC 700724).